A 219-amino-acid chain; its full sequence is 2-hydroxy-3-keto-5-methylthiopentenyl-1-phosphate phosphatase (219 aa).

It belongs to the HAD-like hydrolase superfamily. MtnX family.

The enzyme catalyses 2-hydroxy-5-methylsulfanyl-3-oxopent-1-enyl phosphate + H2O = 1,2-dihydroxy-5-(methylsulfanyl)pent-1-en-3-one + phosphate. Its pathway is amino-acid biosynthesis; L-methionine biosynthesis via salvage pathway; L-methionine from S-methyl-5-thio-alpha-D-ribose 1-phosphate: step 4/6. In terms of biological role, dephosphorylates 2-hydroxy-3-keto-5-methylthiopentenyl-1-phosphate (HK-MTPenyl-1-P) yielding 1,2-dihydroxy-3-keto-5-methylthiopentene (DHK-MTPene). This is 2-hydroxy-3-keto-5-methylthiopentenyl-1-phosphate phosphatase from Bacillus cereus (strain B4264).